Reading from the N-terminus, the 570-residue chain is KH homology domain-containing protein 4 (570 aa).

The interval 1–29 (MSFGVPHSGGSRRSKWDQAGPDADAGSAP) is disordered. 2 consecutive KH domains span residues 77–157 (DDLV…RIKE) and 210–292 (VFVG…NLLQ). The span at 391–407 (PPTAPVPPKLTAPPNPP) shows a compositional bias: pro residues. Disordered regions lie at residues 391-410 (PPTAPVPPKLTAPPNPPQKR), 438-500 (AGMP…EPQV), and 512-570 (GDSS…WMAP). A required for nuclear retention region spans residues 427 to 497 (QHGPIHMTNL…ESPSAPSLLE (71 aa)). Over residues 553 to 562 (TQTAPQPTQQ) the composition is skewed to low complexity.

The protein belongs to the KHDC4 family. In terms of assembly, interacts with PRPF19.

The protein resides in the nucleus. The protein localises to the cytoplasm. Functionally, RNA-binding protein involved in pre-mRNA splicing. Interacts with the PRP19C/Prp19 complex/NTC/Nineteen complex which is part of the spliceosome. Involved in regulating splice site selection. Binds preferentially RNA with A/C rich sequences and poly-C stretches. This is KH homology domain-containing protein 4 (khdc4) from Danio rerio (Zebrafish).